An 89-amino-acid polypeptide reads, in one-letter code: Small ribosomal subunit protein uS15 (89 aa).

The protein belongs to the universal ribosomal protein uS15 family. In terms of assembly, part of the 30S ribosomal subunit. Forms a bridge to the 50S subunit in the 70S ribosome, contacting the 23S rRNA.

Functionally, one of the primary rRNA binding proteins, it binds directly to 16S rRNA where it helps nucleate assembly of the platform of the 30S subunit by binding and bridging several RNA helices of the 16S rRNA. In terms of biological role, forms an intersubunit bridge (bridge B4) with the 23S rRNA of the 50S subunit in the ribosome. This is Small ribosomal subunit protein uS15 from Beutenbergia cavernae (strain ATCC BAA-8 / DSM 12333 / CCUG 43141 / JCM 11478 / NBRC 16432 / NCIMB 13614 / HKI 0122).